The chain runs to 842 residues: Microcephalin (842 aa).

A BRCT 1 domain is found at 1-93 (MAAPILKDVV…AHIDESLFPA (93 aa)). Residues serine 279, serine 287, serine 296, and serine 333 each carry the phosphoserine modification. Threonine 335 bears the Phosphothreonine mark. Residues 346 to 359 (HSRPRSSSVKRKRV) are compositionally biased toward basic residues. Disordered stretches follow at residues 346–375 (HSRP…KRKR), 418–443 (PDNL…AQFS), and 563–624 (VGLK…PTRR). Polar residues-rich tracts occupy residues 434 to 443 (QLPSNPAQFS) and 566 to 582 (KSTQ…NSSE). A compositionally biased stretch (basic and acidic residues) spans 586–608 (PSEHEPRSVVDCNVERSAEEKEN). 2 BRCT domains span residues 647-737 (SGKG…PFEL) and 758-840 (YRGT…NYLL).

In terms of assembly, interacts with CDC27 and maybe other components of the APC/C complex. Interacts with histone variant H2AX under DNA damage conditions.

The protein localises to the cytoplasm. Its subcellular location is the cytoskeleton. The protein resides in the microtubule organizing center. It is found in the centrosome. In terms of biological role, implicated in chromosome condensation and DNA damage induced cellular responses. May play a role in neurogenesis and regulation of the size of the cerebral cortex. This Macaca fascicularis (Crab-eating macaque) protein is Microcephalin.